A 166-amino-acid chain; its full sequence is Large ribosomal subunit protein uL10 (166 aa).

The protein belongs to the universal ribosomal protein uL10 family. As to quaternary structure, part of the ribosomal stalk of the 50S ribosomal subunit. The N-terminus interacts with L11 and the large rRNA to form the base of the stalk. The C-terminus forms an elongated spine to which L12 dimers bind in a sequential fashion forming a multimeric L10(L12)X complex.

In terms of biological role, forms part of the ribosomal stalk, playing a central role in the interaction of the ribosome with GTP-bound translation factors. The polypeptide is Large ribosomal subunit protein uL10 (Staphylococcus aureus (strain JH1)).